The chain runs to 405 residues: Adenosylhomocysteinase (405 aa).

Positions 113 and 138 each coordinate substrate. 139-141 (TTT) is a binding site for NAD(+). Positions 168 and 172 each coordinate substrate. Residues Asn-173, 202 to 207 (GYGWCG), Glu-225, Asn-260, 281 to 283 (AGH), and Asn-327 contribute to the NAD(+) site.

This sequence belongs to the adenosylhomocysteinase family. NAD(+) is required as a cofactor.

The protein localises to the cytoplasm. It carries out the reaction S-adenosyl-L-homocysteine + H2O = L-homocysteine + adenosine. It participates in amino-acid biosynthesis; L-homocysteine biosynthesis; L-homocysteine from S-adenosyl-L-homocysteine: step 1/1. Its function is as follows. May play a key role in the regulation of the intracellular concentration of adenosylhomocysteine. The sequence is that of Adenosylhomocysteinase from Archaeoglobus fulgidus (strain ATCC 49558 / DSM 4304 / JCM 9628 / NBRC 100126 / VC-16).